A 395-amino-acid polypeptide reads, in one-letter code: E3 ubiquitin-protein ligase NHLRC1 (395 aa).

Residues 26–72 form an RING-type zinc finger; that stretch reads CKVCFEKFGHRQQRRPRNLSCGHVVCLACVAALAHPRTLALECPFCR. NHL repeat units lie at residues 113 to 157, 161 to 204, 205 to 245, 248 to 300, 301 to 349, and 350 to 393; these read ALTC…FDSG, AHQF…FDFF, GQIK…LDVD, EGVL…FSSS, MQLV…LGKP, and EEFP…YKVD.

Interacts with AGL. Interacts (via the NHL repeats) with EPM2A/laforin. Forms a complex with EPM2A/laforin and HSP70. Interacts with PRDM8. In terms of tissue distribution, expressed in brain, cerebellum, spinal cord, medulla, heart, liver, skeletal muscle and pancreas.

The protein localises to the endoplasmic reticulum. The protein resides in the nucleus. The enzyme catalyses S-ubiquitinyl-[E2 ubiquitin-conjugating enzyme]-L-cysteine + [acceptor protein]-L-lysine = [E2 ubiquitin-conjugating enzyme]-L-cysteine + N(6)-ubiquitinyl-[acceptor protein]-L-lysine.. It participates in protein modification; protein ubiquitination. Its function is as follows. E3 ubiquitin-protein ligase. Together with the phosphatase EPM2A/laforin, appears to be involved in the clearance of toxic polyglucosan and protein aggregates via multiple pathways. In complex with EPM2A/laforin and HSP70, suppresses the cellular toxicity of misfolded proteins by promoting their degradation through the ubiquitin-proteasome system (UPS). Ubiquitinates the glycogen-targeting protein phosphatase subunits PPP1R3C/PTG and PPP1R3D in a laforin-dependent manner and targets them for proteasome-dependent degradation, thus decreasing glycogen accumulation. Polyubiquitinates EPM2A/laforin and ubiquitinates AGL and targets them for proteasome-dependent degradation. Also promotes proteasome-independent protein degradation through the macroautophagy pathway. The polypeptide is E3 ubiquitin-protein ligase NHLRC1 (NHLRC1) (Homo sapiens (Human)).